Consider the following 109-residue polypeptide: FK506-binding protein (109 aa).

The 89-residue stretch at 20–108 (GKEITVHYTG…IFEVELLKVY (89 aa)) folds into the PPIase FKBP-type domain.

The protein belongs to the FKBP-type PPIase family.

The catalysed reaction is [protein]-peptidylproline (omega=180) = [protein]-peptidylproline (omega=0). Its activity is regulated as follows. Inhibited by FK506. PPIases accelerate the folding of proteins. The polypeptide is FK506-binding protein (fbp) (Neisseria meningitidis serogroup B (strain ATCC BAA-335 / MC58)).